Reading from the N-terminus, the 146-residue chain is 3-dehydroquinate dehydratase (146 aa).

Y22 functions as the Proton acceptor in the catalytic mechanism. Substrate-binding residues include N74, H80, and D87. Residue H100 is the Proton donor of the active site. Substrate is bound by residues L101–S102 and R111.

This sequence belongs to the type-II 3-dehydroquinase family. As to quaternary structure, homododecamer.

The enzyme catalyses 3-dehydroquinate = 3-dehydroshikimate + H2O. Its pathway is metabolic intermediate biosynthesis; chorismate biosynthesis; chorismate from D-erythrose 4-phosphate and phosphoenolpyruvate: step 3/7. Catalyzes a trans-dehydration via an enolate intermediate. The chain is 3-dehydroquinate dehydratase from Clostridium perfringens (strain SM101 / Type A).